A 532-amino-acid chain; its full sequence is Protein FAM227B (532 aa).

Residues 432–482 (DNKKDFKRVKQRIKDDIKFLREQQELIDKELDRIQAKASKNLQEVKNEFEN) are a coiled coil. The disordered stretch occupies residues 494–532 (KEEYGGSTSASESPQSMQSPQSSSSFPTISEDFNNVEEG). Low complexity predominate over residues 500–523 (STSASESPQSMQSPQSSSSFPTIS).

This sequence belongs to the FAM227 family.

The protein is Protein FAM227B (Fam227b) of Mus musculus (Mouse).